The following is a 588-amino-acid chain: Zeta-carotene desaturase, chloroplastic/chromoplastic (588 aa).

Belongs to the zeta carotene desaturase family. It depends on NAD(+) as a cofactor. NADP(+) serves as cofactor. The cofactor is FAD.

Its subcellular location is the plastid. The protein localises to the chloroplast. It localises to the chromoplast. It catalyses the reaction 9,9'-di-cis-zeta-carotene + 2 a quinone = 7,7',9,9'-tetra-cis-lycopene + 2 a quinol. Its pathway is carotenoid biosynthesis; lycopene biosynthesis. Functionally, catalyzes the conversion of zeta-carotene to lycopene via the intermediary of neurosporene. It carries out two consecutive desaturations (introduction of double bonds) at positions C-7 and C-7'. The polypeptide is Zeta-carotene desaturase, chloroplastic/chromoplastic (ZDS) (Solanum lycopersicum (Tomato)).